Here is a 638-residue protein sequence, read N- to C-terminus: ATP-dependent zinc metalloprotease FtsH (638 aa).

Residues 1 to 15 (MDNNHKGPNDPNSKK) lie on the Cytoplasmic side of the membrane. The helical transmembrane segment at 16 to 36 (PLLQNPLLLIAIFGIIIFVAM) threads the bilayer. Residues 37-122 (RVMNSDEGFG…INYSGFSESN (86 aa)) are Periplasmic-facing. A helical membrane pass occupies residues 123-143 (FFADILGWLLPVLVILGLWMF). The Cytoplasmic segment spans residues 144–638 (MASRMQKNMG…RLVPLEEHAS (495 aa)). 216-223 (GPPGTGKT) is an ATP binding site. H440 lines the Zn(2+) pocket. Residue E441 is part of the active site. The Zn(2+) site is built by H444 and D517.

The protein in the central section; belongs to the AAA ATPase family. In the C-terminal section; belongs to the peptidase M41 family. Homohexamer. Requires Zn(2+) as cofactor.

It is found in the cell inner membrane. Acts as a processive, ATP-dependent zinc metallopeptidase for both cytoplasmic and membrane proteins. Plays a role in the quality control of integral membrane proteins. In Helicobacter felis (strain ATCC 49179 / CCUG 28539 / NCTC 12436 / CS1), this protein is ATP-dependent zinc metalloprotease FtsH.